The following is a 446-amino-acid chain: tRNA wybutosine-synthesizing protein 2 homolog (446 aa).

S-adenosyl-L-methionine is bound by residues S208, K215, E255, and 283 to 284 (DN).

The protein belongs to the class I-like SAM-binding methyltransferase superfamily. TRM5/TYW2 family.

It catalyses the reaction 4-demethylwyosine(37) in tRNA(Phe) + S-adenosyl-L-methionine = 4-demethyl-7-[(3S)-3-amino-3-carboxypropyl]wyosine(37) in tRNA(Phe) + S-methyl-5'-thioadenosine + H(+). Its pathway is tRNA modification; wybutosine-tRNA(Phe) biosynthesis. S-adenosyl-L-methionine-dependent transferase that acts as a component of the wybutosine biosynthesis pathway. Wybutosine is a hyper modified guanosine with a tricyclic base found at the 3'-position adjacent to the anticodon of eukaryotic phenylalanine tRNA. Catalyzes the transfer of the alpha-amino-alpha-carboxypropyl (acp) group from S-adenosyl-L-methionine to the C-7 position of 4-demethylwyosine (imG-14) to produce wybutosine-86. The sequence is that of tRNA wybutosine-synthesizing protein 2 homolog (Trmt12) from Mus musculus (Mouse).